We begin with the raw amino-acid sequence, 465 residues long: MTIKIHNTLSNKKEEFYPQRGNFVSMYVCGITPYDEVHLGHARVYVVFDIVKRHLLRRGYIVKHIQNFTDVDDKIVKRSQEKNMKPSELAQIYIEDYFVQAGRLNILKAEKYPCVTQMIPEIVNFIKELVNKGLAYEIGGDIYFSVEKFKDYGKLSKRNLKDLRAGARVGVCNGKNSAFDFALWKKTKENEPREVTWESPWGKGRPGWHIECSAMSSELLGDTIDIHGGGQDLIFPHHENEIAQSEAKTGKKFVKYWIHNGFVTINKEKMSKSLNNFFTLKAIFEKYNPRVVRYYLLTQHYSSPLDFSDAGIESARNTLQGMDGTYLRLISSVKESDVEITDKDLSDLQGNFLSALDDDFNSEKALSYLHELKGLISKGLLTAGRERLSQLKKLFEDFAGTSLGILLPEEQNADESLQNLLKERNDARKNKNWAESDRVRKLIIDERGYKIFDNKDGSSLLVKKV.

Cys29 serves as a coordination point for Zn(2+). Residues Ile31 to His41 carry the 'HIGH' region motif. Residues Cys212, His237, and Glu241 each contribute to the Zn(2+) site. Residues Lys269–Ser273 carry the 'KMSKS' region motif. Lys272 contacts ATP.

This sequence belongs to the class-I aminoacyl-tRNA synthetase family. Monomer. It depends on Zn(2+) as a cofactor.

The protein localises to the cytoplasm. It catalyses the reaction tRNA(Cys) + L-cysteine + ATP = L-cysteinyl-tRNA(Cys) + AMP + diphosphate. The sequence is that of Cysteine--tRNA ligase from Endomicrobium trichonymphae.